We begin with the raw amino-acid sequence, 344 residues long: L-threonine 3-dehydrogenase (344 aa).

C42 serves as a coordination point for Zn(2+). Active-site charge relay system residues include T44 and H47. H67, E68, C97, C100, C103, and C111 together coordinate Zn(2+). Residues I179, D199, R204, 266–268 (LGI), and 290–291 (IY) contribute to the NAD(+) site.

Belongs to the zinc-containing alcohol dehydrogenase family. As to quaternary structure, homotetramer. Requires Zn(2+) as cofactor.

The protein localises to the cytoplasm. It carries out the reaction L-threonine + NAD(+) = (2S)-2-amino-3-oxobutanoate + NADH + H(+). It participates in amino-acid degradation; L-threonine degradation via oxydo-reductase pathway; glycine from L-threonine: step 1/2. Its function is as follows. Catalyzes the NAD(+)-dependent oxidation of L-threonine to 2-amino-3-ketobutyrate. The polypeptide is L-threonine 3-dehydrogenase (Chelativorans sp. (strain BNC1)).